The following is a 555-amino-acid chain: MTRYIFITGGVVSSLGKGITSASLGAILEAQGLTVTLLKLDPYINVDPGTMSPFQHGEVFVTEDGAETDLDLGHYERFVNATMTRKNNFTTGRVYADVIRKERRGDYLGGTIQVIPHITDEIKAKIREGADGADVALVEVGGTVGDIESLPFLEAIRQMRIELGDQQTLFIHLTLVPYVAVAGEIKTKPTQHSVKELRSIGIQPDILVCRSEQPLPDAERAKIALFTNVPEPSVISLSDVKSIYEIPLILRDQGLGNRVCEKLNIKATAADLDDWKKVVQAQKNPRHTVTVAVVGKYVDLEDSYKSLSEALIHAGIHTQTRVVIEYIDSEAIELHGTELLKKVDAILVPGGFGSRGIEGKILAAQYARENGIPYFGICLGMQIAIIEFARDKAQMENANSTEFDPKTPFPVVALVSEWMAKEGIIEKRKWGDDLGGTMRLGGQPCRLKIDSLARRLYGEDRVIERHRHRYEVNNDLIGELEKKGLVISGRSIDDRLVEMIELADHPWFVGCQFHPEFTSTPRKGHPLFIGFIKAGLAAKEAKKAVLAAPSQEKTD.

Residues 1–265 (MTRYIFITGG…GNRVCEKLNI (265 aa)) form an amidoligase domain region. Serine 13 is a binding site for CTP. Serine 13 provides a ligand contact to UTP. ATP-binding positions include 14–19 (SLGKGI) and aspartate 71. The Mg(2+) site is built by aspartate 71 and glutamate 139. CTP contacts are provided by residues 146 to 148 (DIE), 186 to 191 (KTKPTQ), and lysine 222. Residues 186–191 (KTKPTQ) and lysine 222 contribute to the UTP site. Residues 290 to 541 (TVAVVGKYVD…IKAGLAAKEA (252 aa)) form the Glutamine amidotransferase type-1 domain. An L-glutamine-binding site is contributed by glycine 351. Residue cysteine 378 is the Nucleophile; for glutamine hydrolysis of the active site. L-glutamine is bound by residues 379-382 (LGMQ), glutamate 402, and arginine 469. Catalysis depends on residues histidine 514 and glutamate 516.

This sequence belongs to the CTP synthase family. As to quaternary structure, homotetramer.

The enzyme catalyses UTP + L-glutamine + ATP + H2O = CTP + L-glutamate + ADP + phosphate + 2 H(+). It catalyses the reaction L-glutamine + H2O = L-glutamate + NH4(+). It carries out the reaction UTP + NH4(+) + ATP = CTP + ADP + phosphate + 2 H(+). It functions in the pathway pyrimidine metabolism; CTP biosynthesis via de novo pathway; CTP from UDP: step 2/2. Its activity is regulated as follows. Allosterically activated by GTP, when glutamine is the substrate; GTP has no effect on the reaction when ammonia is the substrate. The allosteric effector GTP functions by stabilizing the protein conformation that binds the tetrahedral intermediate(s) formed during glutamine hydrolysis. Inhibited by the product CTP, via allosteric rather than competitive inhibition. Catalyzes the ATP-dependent amination of UTP to CTP with either L-glutamine or ammonia as the source of nitrogen. Regulates intracellular CTP levels through interactions with the four ribonucleotide triphosphates. The sequence is that of CTP synthase from Coxiella burnetii (strain RSA 493 / Nine Mile phase I).